Here is a 453-residue protein sequence, read N- to C-terminus: Pup--protein ligase (453 aa).

Position 9 (Glu9) interacts with Mg(2+). Arg53 serves as a coordination point for ATP. Mg(2+) is bound at residue Tyr55. Residue Asp57 is the Proton acceptor of the active site. Position 63 (Glu63) interacts with Mg(2+). ATP is bound by residues Thr66 and Trp420.

It belongs to the Pup ligase/Pup deamidase family. Pup-conjugating enzyme subfamily.

The enzyme catalyses ATP + [prokaryotic ubiquitin-like protein]-L-glutamate + [protein]-L-lysine = ADP + phosphate + N(6)-([prokaryotic ubiquitin-like protein]-gamma-L-glutamyl)-[protein]-L-lysine.. It functions in the pathway protein degradation; proteasomal Pup-dependent pathway. The protein operates within protein modification; protein pupylation. Functionally, catalyzes the covalent attachment of the prokaryotic ubiquitin-like protein modifier Pup to the proteasomal substrate proteins, thereby targeting them for proteasomal degradation. This tagging system is termed pupylation. The ligation reaction involves the side-chain carboxylate of the C-terminal glutamate of Pup and the side-chain amino group of a substrate lysine. The protein is Pup--protein ligase of Nocardioides sp. (strain ATCC BAA-499 / JS614).